A 162-amino-acid chain; its full sequence is ATP synthase subunit b 1 (162 aa).

The chain crosses the membrane as a helical span at residues Phe3 to Tyr23.

The protein belongs to the ATPase B chain family. F-type ATPases have 2 components, F(1) - the catalytic core - and F(0) - the membrane proton channel. F(1) has five subunits: alpha(3), beta(3), gamma(1), delta(1), epsilon(1). F(0) has three main subunits: a(1), b(2) and c(10-14). The alpha and beta chains form an alternating ring which encloses part of the gamma chain. F(1) is attached to F(0) by a central stalk formed by the gamma and epsilon chains, while a peripheral stalk is formed by the delta and b chains.

Its subcellular location is the cell inner membrane. In terms of biological role, f(1)F(0) ATP synthase produces ATP from ADP in the presence of a proton or sodium gradient. F-type ATPases consist of two structural domains, F(1) containing the extramembraneous catalytic core and F(0) containing the membrane proton channel, linked together by a central stalk and a peripheral stalk. During catalysis, ATP synthesis in the catalytic domain of F(1) is coupled via a rotary mechanism of the central stalk subunits to proton translocation. Component of the F(0) channel, it forms part of the peripheral stalk, linking F(1) to F(0). This is ATP synthase subunit b 1 from Rhizobium johnstonii (strain DSM 114642 / LMG 32736 / 3841) (Rhizobium leguminosarum bv. viciae).